A 302-amino-acid polypeptide reads, in one-letter code: MQWLEAGIVFETEDLFAQTAAELVCNIFYDLGLSGVVTEDPVPVSDHGVRGRVIGYLPVDEALEQTRADLEQMASGLSARHPVRCTLEFTPCDDQDWANAWKDHFFVQKIGRNIVVRPTWRDHVPEPGEVVIDLDPGMAFGTGTHPTTAMCLEMVEKHLAPGTAFLDVGTGSGILMIAAQKLGAKTVWGVDNDGVAVKIAAENLERNGIFAGGNACRIMRADLVTGVDRAFDLVTANILSEVIVALADDVGRVVVPGGLLVCSGIIEPKQAMVEAKLTACGFDIIERKTTDLWVCLVARRTP.

Residues Thr-148, Gly-169, Asp-191, and Asn-237 each coordinate S-adenosyl-L-methionine.

The protein belongs to the methyltransferase superfamily. PrmA family.

The protein resides in the cytoplasm. The catalysed reaction is L-lysyl-[protein] + 3 S-adenosyl-L-methionine = N(6),N(6),N(6)-trimethyl-L-lysyl-[protein] + 3 S-adenosyl-L-homocysteine + 3 H(+). Its function is as follows. Methylates ribosomal protein L11. This is Ribosomal protein L11 methyltransferase from Desulfosudis oleivorans (strain DSM 6200 / JCM 39069 / Hxd3) (Desulfococcus oleovorans).